Reading from the N-terminus, the 134-residue chain is Large-conductance mechanosensitive channel (134 aa).

The next 2 helical transmembrane spans lie at 16 to 36 (VIDL…VTAL) and 81 to 101 (GDFL…FIIV).

It belongs to the MscL family. Homopentamer.

It localises to the cell inner membrane. Channel that opens in response to stretch forces in the membrane lipid bilayer. May participate in the regulation of osmotic pressure changes within the cell. This is Large-conductance mechanosensitive channel from Xylella fastidiosa (strain 9a5c).